Reading from the N-terminus, the 722-residue chain is Probable glycerol-3-phosphate dehydrogenase, mitochondrial (722 aa).

A mitochondrion-targeting transit peptide spans 1-43 (MSWVRFTKTGVAVVATSAAAVLALDMTNERRFQRQVKDHFRTV). 76 to 104 (DVLIIGGGATGAGVALDAQTRGLKTALVE) is a binding site for FAD. 2 consecutive EF-hand domains span residues 624–659 (EEMQRAKERFQQLDKDRKGHITVNDLRKHFREHNQK) and 660–695 (IDERVLHELLNEVDLNKNGEIEIAEFFQLYSGLKGG). Residues D673, N675, N677, E679, and E684 each coordinate Ca(2+).

Belongs to the FAD-dependent glycerol-3-phosphate dehydrogenase family. The cofactor is FAD.

It localises to the mitochondrion. It catalyses the reaction a quinone + sn-glycerol 3-phosphate = dihydroxyacetone phosphate + a quinol. It participates in polyol metabolism; glycerol degradation via glycerol kinase pathway; glycerone phosphate from sn-glycerol 3-phosphate (anaerobic route): step 1/1. With respect to regulation, calcium-binding enhances the activity of the enzyme. The polypeptide is Probable glycerol-3-phosphate dehydrogenase, mitochondrial (Caenorhabditis elegans).